We begin with the raw amino-acid sequence, 204 residues long: Imidazoleglycerol-phosphate dehydratase (204 aa).

Belongs to the imidazoleglycerol-phosphate dehydratase family.

Its subcellular location is the cytoplasm. The catalysed reaction is D-erythro-1-(imidazol-4-yl)glycerol 3-phosphate = 3-(imidazol-4-yl)-2-oxopropyl phosphate + H2O. It participates in amino-acid biosynthesis; L-histidine biosynthesis; L-histidine from 5-phospho-alpha-D-ribose 1-diphosphate: step 6/9. The sequence is that of Imidazoleglycerol-phosphate dehydratase from Corynebacterium urealyticum (strain ATCC 43042 / DSM 7109).